We begin with the raw amino-acid sequence, 40 residues long: Sapecin-C (40 aa).

Disulfide bonds link Cys-3-Cys-30, Cys-16-Cys-36, and Cys-20-Cys-38.

Belongs to the invertebrate defensin family. Type 1 subfamily. In terms of tissue distribution, hemocytes and fat body.

It is found in the secreted. Its function is as follows. Sapecins, which are potent bactericidal proteins, are produced in response to injury. Sapecin C is cytotoxic to Gram-positive bacteria. This Sarcophaga peregrina (Flesh fly) protein is Sapecin-C.